The primary structure comprises 301 residues: Glycine--tRNA ligase alpha subunit (301 aa).

This sequence belongs to the class-II aminoacyl-tRNA synthetase family. As to quaternary structure, tetramer of two alpha and two beta subunits.

The protein localises to the cytoplasm. The enzyme catalyses tRNA(Gly) + glycine + ATP = glycyl-tRNA(Gly) + AMP + diphosphate. This chain is Glycine--tRNA ligase alpha subunit, found in Shewanella oneidensis (strain ATCC 700550 / JCM 31522 / CIP 106686 / LMG 19005 / NCIMB 14063 / MR-1).